The sequence spans 35 residues: Kappa-theraphotoxin-Tb1c (35 aa).

3 cysteine pairs are disulfide-bonded: Cys-3–Cys-18, Cys-10–Cys-23, and Cys-17–Cys-30.

Belongs to the neurotoxin 10 (Hwtx-1) family. 59 (Tltx) subfamily. As to quaternary structure, monomer. Expressed by the venom gland.

It localises to the secreted. Functionally, blocks Kv4.2/KCND2 voltage-gated potassium channels probably by shifting the voltage-dependence of channel activation to more depolarized potentials and by binding to the S3-S4 linker region of the voltage sensor domain. The sequence is that of Kappa-theraphotoxin-Tb1c from Theraphosa blondi (Goliath birdeating spider).